A 156-amino-acid polypeptide reads, in one-letter code: Arginine repressor (156 aa).

The protein belongs to the ArgR family.

The protein localises to the cytoplasm. Its pathway is amino-acid biosynthesis; L-arginine biosynthesis [regulation]. Regulates arginine biosynthesis genes. This is Arginine repressor from Shewanella pealeana (strain ATCC 700345 / ANG-SQ1).